The primary structure comprises 277 residues: Large ribosomal subunit protein uL15c (277 aa).

The N-terminal 67 residues, 1–67, are a transit peptide targeting the chloroplast; sequence MATPLSISSN…FARPLVVVSQ (67 aa). Position 68 is an N-acetylthreonine (Thr-68). The tract at residues 81–125 is disordered; sequence FRLDNLGPQPGSRKKQKRKGRGISAGQGASCGFGMRGQKSRSGPG. Basic residues predominate over residues 92 to 101; the sequence is SRKKQKRKGR. The segment covering 103-115 has biased composition (gly residues); that stretch reads ISAGQGASCGFGM.

Belongs to the universal ribosomal protein uL15 family. Part of the 50S ribosomal subunit.

The protein resides in the plastid. It is found in the chloroplast. This Arabidopsis thaliana (Mouse-ear cress) protein is Large ribosomal subunit protein uL15c (RPL15).